We begin with the raw amino-acid sequence, 667 residues long: Long-chain-fatty-acid--CoA ligase ACSBG2 (667 aa).

Residues 227–235 (TSGTTGTPK), 418–423 (EIYGMS), Asp496, Arg511, and Arg624 contribute to the ATP site.

The protein belongs to the ATP-dependent AMP-binding enzyme family. Bubblegum subfamily. As to expression, testis- and brainstem-specific. Expressed in pubertal and adult testis. Enriched in germ cells and Sertoli cells while present at a lower level in Leydig cells. Present in testicular Sertoli cells and large motoneurons in the medulla oblongata and cervical spinal cord (at protein level).

It is found in the cytoplasm. The protein resides in the membrane. It catalyses the reaction a long-chain fatty acid + ATP + CoA = a long-chain fatty acyl-CoA + AMP + diphosphate. The enzyme catalyses (5Z,8Z,11Z,14Z)-eicosatetraenoate + ATP + CoA = (5Z,8Z,11Z,14Z)-eicosatetraenoyl-CoA + AMP + diphosphate. It carries out the reaction hexadecanoate + ATP + CoA = hexadecanoyl-CoA + AMP + diphosphate. The catalysed reaction is (9Z)-octadecenoate + ATP + CoA = (9Z)-octadecenoyl-CoA + AMP + diphosphate. It catalyses the reaction (9Z,12Z)-octadecadienoate + ATP + CoA = (9Z,12Z)-octadecadienoyl-CoA + AMP + diphosphate. The enzyme catalyses tetracosanoate + ATP + CoA = tetracosanoyl-CoA + AMP + diphosphate. Catalyzes the conversion of fatty acids such as long chain and very long-chain fatty acids to their active form acyl-CoAs for both synthesis of cellular lipids, and degradation via beta-oxidation. Can activate diverse saturated, monosaturated and polyunsaturated fatty acids. Has increased ability to activate oleic and linoleic acid. May play a role in spermatogenesis. In Mus musculus (Mouse), this protein is Long-chain-fatty-acid--CoA ligase ACSBG2.